Consider the following 107-residue polypeptide: Small ribosomal subunit protein uS10c (107 aa).

This sequence belongs to the universal ribosomal protein uS10 family. As to quaternary structure, part of the 30S ribosomal subunit.

It is found in the plastid. Its subcellular location is the chloroplast. In terms of biological role, involved in the binding of tRNA to the ribosomes. The chain is Small ribosomal subunit protein uS10c from Thalassiosira pseudonana (Marine diatom).